We begin with the raw amino-acid sequence, 165 residues long: Large ribosomal subunit protein uL11 (165 aa).

Belongs to the universal ribosomal protein uL11 family.

In terms of biological role, binds directly to 26S ribosomal RNA. The protein is Large ribosomal subunit protein uL11 (rpl-12) of Caenorhabditis briggsae.